Reading from the N-terminus, the 197-residue chain is Rac-like GTP-binding protein RAC1 (197 aa).

Position 13–20 (13–20 (GDGAVGKT)) interacts with GTP. Residues 35–43 (YVPTVFDNF) carry the Effector region motif. Residues 60-64 (DTAGQ) and 118-121 (TKLD) each bind GTP. At Cys194 the chain carries Cysteine methyl ester. Residue Cys194 is the site of S-geranylgeranyl cysteine attachment. Positions 195-197 (SIL) are cleaved as a propeptide — removed in mature form.

This sequence belongs to the small GTPase superfamily. Rho family.

The protein localises to the cytoplasm. It localises to the membrane. Inactive GDP-bound Rho GTPases reside in the cytosol, are found in a complex with Rho GDP-dissociation inhibitors (Rho GDIs), and are released from the GDI protein in order to translocate to membranes upon activation. The sequence is that of Rac-like GTP-binding protein RAC1 (RAC1) from Lotus japonicus (Lotus corniculatus var. japonicus).